Here is a 248-residue protein sequence, read N- to C-terminus: Probable transcriptional regulatory protein R02753 (248 aa).

The protein belongs to the TACO1 family.

Its subcellular location is the cytoplasm. The sequence is that of Probable transcriptional regulatory protein R02753 from Rhizobium meliloti (strain 1021) (Ensifer meliloti).